The sequence spans 575 residues: Probable ferredoxin/ferredoxin--NADP reductase (575 aa).

2 consecutive 4Fe-4S ferredoxin-type domains span residues 2 to 29 and 37 to 66; these read PHVI…PTPD and EMLY…PNTR. [4Fe-4S] cluster-binding residues include Cys9, Cys15, Cys19, Cys46, Cys49, Cys52, and Cys56. Residues 115–575 form a ferredoxin--NADP reductase region; it reads VAVVGSGPAA…GQPIVLTVPL (461 aa). Residues Ala123, Glu143, Leu151, and Ile187 each coordinate FAD. Residues Arg213, 258–261, 302–303, and Glu314 contribute to the NADP(+) site; these read NGNV and RR. FAD-binding positions include Trp456 and 463–465; that span reads GFI. Gly463 contributes to the NADP(+) binding site.

This sequence in the C-terminal section; belongs to the ferredoxin--NADP reductase family. Requires [4Fe-4S] cluster as cofactor. FAD is required as a cofactor.

It catalyses the reaction 2 reduced [2Fe-2S]-[ferredoxin] + NADP(+) + H(+) = 2 oxidized [2Fe-2S]-[ferredoxin] + NADPH. This is Probable ferredoxin/ferredoxin--NADP reductase (fprB) from Mycobacterium bovis (strain ATCC BAA-935 / AF2122/97).